A 106-amino-acid chain; its full sequence is A-type ATP synthase subunit F (106 aa).

The protein belongs to the V-ATPase F subunit family. In terms of assembly, has multiple subunits with at least A(3), B(3), C, D, E, F, H, I and proteolipid K(x).

It is found in the cell membrane. In terms of biological role, component of the A-type ATP synthase that produces ATP from ADP in the presence of a proton gradient across the membrane. The chain is A-type ATP synthase subunit F from Methanothermobacter thermautotrophicus (strain ATCC 29096 / DSM 1053 / JCM 10044 / NBRC 100330 / Delta H) (Methanobacterium thermoautotrophicum).